The sequence spans 644 residues: Exoribonuclease 2 (644 aa).

Positions 189–516 (REDLTALNFV…NHRLLKAMIT (328 aa)) constitute an RNB domain. Residues 561–643 (DTRFTAEIID…ETRNVIARPV (83 aa)) form the S1 motif domain.

This sequence belongs to the RNR ribonuclease family. RNase II subfamily.

It is found in the cytoplasm. It carries out the reaction Exonucleolytic cleavage in the 3'- to 5'-direction to yield nucleoside 5'-phosphates.. In terms of biological role, involved in mRNA degradation. Hydrolyzes single-stranded polyribonucleotides processively in the 3' to 5' direction. The chain is Exoribonuclease 2 from Yersinia pseudotuberculosis serotype IB (strain PB1/+).